We begin with the raw amino-acid sequence, 705 residues long: Polyribonucleotide nucleotidyltransferase (705 aa).

Residues Asp494 and Asp500 each coordinate Mg(2+). A KH domain is found at 561 to 620 (PRITTVKVKPEKVRAVIGTGGKNIRQIVSETGVTIDVEDDGTVTIASSDMEASARAIAMV). Residues 630–698 (GKIYRGTVKK…KQGKIRLSRK (69 aa)) enclose the S1 motif domain.

This sequence belongs to the polyribonucleotide nucleotidyltransferase family. Requires Mg(2+) as cofactor.

It is found in the cytoplasm. The enzyme catalyses RNA(n+1) + phosphate = RNA(n) + a ribonucleoside 5'-diphosphate. In terms of biological role, involved in mRNA degradation. Catalyzes the phosphorolysis of single-stranded polyribonucleotides processively in the 3'- to 5'-direction. The chain is Polyribonucleotide nucleotidyltransferase from Syntrophus aciditrophicus (strain SB).